A 317-amino-acid polypeptide reads, in one-letter code: Aspartate carbamoyltransferase catalytic subunit (317 aa).

Arg-55 and Thr-56 together coordinate carbamoyl phosphate. Residue Lys-83 coordinates L-aspartate. Carbamoyl phosphate is bound by residues Arg-105, His-138, and Gln-141. L-aspartate-binding residues include Arg-171 and Arg-225. The carbamoyl phosphate site is built by Gly-266 and Pro-267.

This sequence belongs to the aspartate/ornithine carbamoyltransferase superfamily. ATCase family. Heterododecamer (2C3:3R2) of six catalytic PyrB chains organized as two trimers (C3), and six regulatory PyrI chains organized as three dimers (R2).

The enzyme catalyses carbamoyl phosphate + L-aspartate = N-carbamoyl-L-aspartate + phosphate + H(+). Its pathway is pyrimidine metabolism; UMP biosynthesis via de novo pathway; (S)-dihydroorotate from bicarbonate: step 2/3. In terms of biological role, catalyzes the condensation of carbamoyl phosphate and aspartate to form carbamoyl aspartate and inorganic phosphate, the committed step in the de novo pyrimidine nucleotide biosynthesis pathway. This is Aspartate carbamoyltransferase catalytic subunit from Mycobacteroides abscessus (strain ATCC 19977 / DSM 44196 / CCUG 20993 / CIP 104536 / JCM 13569 / NCTC 13031 / TMC 1543 / L948) (Mycobacterium abscessus).